Here is a 317-residue protein sequence, read N- to C-terminus: Bile salt hydrolase/transferase (317 aa).

The active-site Nucleophile; acyl-thioester intermediate is C2. Residues C2 and R18 each coordinate deoxycholate. N82 lines the taurine pocket.

This sequence belongs to the peptidase C59 family. Homotetramer. The tetramer consists of a dimer of dimers.

The enzyme catalyses glycocholate + H2O = cholate + glycine. It catalyses the reaction glycodeoxycholate + H2O = deoxycholate + glycine. It carries out the reaction chenodeoxycholate + glycine = glycochenodeoxycholate + H2O. The catalysed reaction is cholate + taurine = taurocholate + H2O. The enzyme catalyses taurodeoxycholate + H2O = deoxycholate + taurine. It catalyses the reaction taurochenodeoxycholate + H2O = chenodeoxycholate + taurine. It carries out the reaction an L-alpha-amino acid + cholate = an N-choloyl-L-alpha-amino acid + H2O. The catalysed reaction is an L-alpha-amino acid + taurocholate = an N-choloyl-L-alpha-amino acid + taurine. The enzyme catalyses cholate + L-alanine = L-alanocholate + H2O. It catalyses the reaction taurocholate + L-alanine = L-alanocholate + taurine. It carries out the reaction cholate + L-serine = L-serocholate + H2O. The catalysed reaction is taurocholate + L-serine = L-serocholate + taurine. The enzyme catalyses cholate + L-histidine = L-histidocholate + H2O. It catalyses the reaction taurocholate + L-histidine = L-histidocholate + taurine. Its pathway is lipid metabolism; bile acid biosynthesis. Hydrolase activity is competitively inhibited by the products cholate (CA) and deoxycholate (DCA), and by phenylacetate and 4-aminophenylacetate. Penicillin V and penicillin G show mixed inhibition. Strongly inhibited by thiol enzyme inhibitors in vitro. Its function is as follows. Possesses dual functions in bile acid metabolism. Acts as a bile salt hydrolase that catalyzes the deconjugation of glycine- and taurine-linked bile salts, which occurs naturally in the intestines of humans, releasing amino acid residues and deconjugated bile salts (bile acids). Can hydrolyze the amide bond in all six major human conjugated bile salts, namely glycocholate (GCA), glycodeoxycholate (GDCA), glycochenodeoxycholate (GCDCA), taurocholate (TCA), taurodeoxycholate (TDCA) and taurochenodeoxycholate (TCDCA). Shows a slight preference for glycine-conjugated bile acids as substrates. Also acts as an amine N-acyltransferase that conjugates a wide variety of amino acids to conjugated and non-conjugated bile acids, thus producing bacterial bile acid amidates (BBAAs) - also named microbially conjugated bile acids (MCBAs) - in the gastrointestinal tract. These BBAAs may facilitate communication between the microbiota and host through the activation of human ligand-activated transcription factors. Is totally inactive toward penicillin V. The protein is Bile salt hydrolase/transferase of Bifidobacterium longum.